The sequence spans 284 residues: Phosphonates import ATP-binding protein PhnC 1 (284 aa).

Residues 5 to 253 (IEVRGLSKSF…MLRDLYGSEA (249 aa)) form the ABC transporter domain. Residue 38 to 45 (GASGSGKS) coordinates ATP.

Belongs to the ABC transporter superfamily. Phosphonates importer (TC 3.A.1.9.1) family. The complex is composed of two ATP-binding proteins (PhnC), two transmembrane proteins (PhnE) and a solute-binding protein (PhnD).

The protein localises to the cell inner membrane. The enzyme catalyses phosphonate(out) + ATP + H2O = phosphonate(in) + ADP + phosphate + H(+). Functionally, part of the ABC transporter complex PhnCDE involved in phosphonates import. Responsible for energy coupling to the transport system. This is Phosphonates import ATP-binding protein PhnC 1 from Cupriavidus metallidurans (strain ATCC 43123 / DSM 2839 / NBRC 102507 / CH34) (Ralstonia metallidurans).